A 656-amino-acid polypeptide reads, in one-letter code: Nuclear elongation and deformation protein 1 (656 aa).

Phosphoserine is present on residues S99 and S103. The segment covering 99–118 has biased composition (polar residues); sequence SPIVSPTTSPKQTPSINVTE. The segment at 99-121 is disordered; that stretch reads SPIVSPTTSPKQTPSINVTEPQD. A Phosphothreonine modification is found at T106. S107, S159, and S286 each carry phosphoserine. Disordered regions lie at residues 282 to 328 and 587 to 656; these read VYGH…VSES and SDEE…ENAV. Low complexity predominate over residues 291–300; that stretch reads PSRTPASPKS. Phosphoserine occurs at positions 318, 321, and 587. The segment covering 318–328 has biased composition (polar residues); it reads SEQSLSPVSES. A compositionally biased stretch (low complexity) spans 596–609; that stretch reads KSTSKSPKTPKNTK. Acidic residues predominate over residues 640–656; the sequence is FEGEEDEEGEEDVENAV.

It belongs to the lipin family. Interacts with dis3, pim1 and nup189.

May have a role in the maintenance of the nuclear envelope structure and in minichromosome stability. In Schizosaccharomyces pombe (strain 972 / ATCC 24843) (Fission yeast), this protein is Nuclear elongation and deformation protein 1 (ned1).